The sequence spans 602 residues: Elongation factor 4 (602 aa).

The tr-type G domain occupies 8–189; the sequence is KNIRNFSIIA…KIITTIPAPS (182 aa). GTP contacts are provided by residues 20-25 and 136-139; these read DHGKST and NKID.

It belongs to the TRAFAC class translation factor GTPase superfamily. Classic translation factor GTPase family. LepA subfamily.

It localises to the cell inner membrane. It catalyses the reaction GTP + H2O = GDP + phosphate + H(+). In terms of biological role, required for accurate and efficient protein synthesis under certain stress conditions. May act as a fidelity factor of the translation reaction, by catalyzing a one-codon backward translocation of tRNAs on improperly translocated ribosomes. Back-translocation proceeds from a post-translocation (POST) complex to a pre-translocation (PRE) complex, thus giving elongation factor G a second chance to translocate the tRNAs correctly. Binds to ribosomes in a GTP-dependent manner. This chain is Elongation factor 4, found in Helicobacter pylori (strain HPAG1).